Here is a 461-residue protein sequence, read N- to C-terminus: Thyroid hormone receptor beta (461 aa).

Positions 1 to 24 (MTPNSMTENRLPAWDKQKPHPDRG) are disordered. The segment at 1-106 (MTPNSMTENR…IPSYLDKDEL (106 aa)) is modulating. The segment covering 13–24 (AWDKQKPHPDRG) has biased composition (basic and acidic residues). Residues C107, C110, C124, C127, C145, C151, C161, and C164 each coordinate Zn(2+). 2 consecutive NR C4-type zinc fingers follow at residues 107 to 127 (CVVCGDKATGYHYRCITCEGC) and 145 to 169 (CKYEGKCIIDKVTRNQCQECRFKKC). Positions 107–181 (CVVCGDKATG…VGMATDLVLD (75 aa)) form a DNA-binding region, nuclear receptor. The 245-residue stretch at 217–461 (EEWELIKTVT…PPLFLEVFED (245 aa)) folds into the NR LBD domain. An interaction with NR2F6 region spans residues 244 to 461 (KFLPEDIGQA…PPLFLEVFED (218 aa)). Residues R282, N331, and H435 each contribute to the 3,3',5-triiodo-L-thyronine site. L-thyroxine-binding residues include R282, N331, and H435.

It belongs to the nuclear hormone receptor family. NR1 subfamily. As to quaternary structure, binds DNA as a dimer; homodimer and heterodimer with RXRA. Interacts with the coactivators NCOA1/SRC1, NCOA2/GRIP1, NCOA7 and MED1/TRAP220 in a ligand-inducible manner. Interacts with the corepressor NCOR1 in absence of ligand. Interacts with C1D. Interacts with NR2F6; the interaction impairs the binding of the THRB homodimer and THRB:RXRB heterodimer to T3 response elements. Interacts with PRMT2 and THRSP. Interacts with TACC1; this interaction is decreased in the presence of thyroid hormone T3.

It is found in the nucleus. In terms of biological role, nuclear hormone receptor that can act as a repressor or activator of transcription. High affinity receptor for thyroid hormones, including triiodothyronine and thyroxine. The chain is Thyroid hormone receptor beta (Thrb) from Rattus norvegicus (Rat).